We begin with the raw amino-acid sequence, 522 residues long: GMP synthase [glutamine-hydrolyzing] (522 aa).

In terms of domain architecture, Glutamine amidotransferase type-1 spans K9–L204. C86 functions as the Nucleophile in the catalytic mechanism. Catalysis depends on residues H178 and E180. A GMPS ATP-PPase domain is found at W205–R397. Residue S232–S238 coordinates ATP.

As to quaternary structure, homodimer.

The catalysed reaction is XMP + L-glutamine + ATP + H2O = GMP + L-glutamate + AMP + diphosphate + 2 H(+). It functions in the pathway purine metabolism; GMP biosynthesis; GMP from XMP (L-Gln route): step 1/1. Catalyzes the synthesis of GMP from XMP. This chain is GMP synthase [glutamine-hydrolyzing], found in Xylella fastidiosa (strain M12).